The sequence spans 41 residues: Alpha-conotoxin TxIB (41 aa).

A propeptide spanning residues 1-20 (FDGRNTSANNKATDLMALPV) is cleaved from the precursor. 2 disulfide bridges follow: Cys-23–Cys-29 and Cys-24–Cys-37. The tract at residues 25–27 (SDP) is ser-Xaa-Pro motif, crucial for potent interaction with nAChR. Position 37 is a cysteine amide; in Alpha-conotoxin TxIB (Cys-37). Residues 39–41 (GRR) constitute a propeptide that is removed on maturation.

It belongs to the conotoxin A superfamily. In terms of tissue distribution, expressed by the venom duct.

The protein resides in the secreted. Alpha-conotoxins act on postsynaptic membranes, they bind to the nicotinic acetylcholine receptors (nAChR) and thus inhibit them. This conotoxin is a subtype-specific blocker of alpha-6/alpha-3-beta-2-beta-3 (CHRNA6/CHRNA3-CHRNB2-CHRNB3) nAChRs nicotinic acetylcholine receptors (nAChRs) (IC(50)=28.4 nM). The protein is Alpha-conotoxin TxIB of Conus textile (Cloth-of-gold cone).